A 298-amino-acid polypeptide reads, in one-letter code: Pheromone-regulated membrane protein 9 (298 aa).

Residues 1–111 (MSPQYHFYFV…YWIYEVTRHK (111 aa)) lie on the Cytoplasmic side of the membrane. The helical transmembrane segment at 112-132 (AAVILLVLIVTSILLLVFFYN) threads the bilayer. At 133-137 (TEFCV) the chain is on the extracellular side. A helical transmembrane segment spans residues 138–158 (AFEILLFSFCFPGTCMVVIAF). Topologically, residues 159 to 298 (SEPIGDREFK…QEYPGVDEFF (140 aa)) are cytoplasmic. The tract at residues 235–262 (SSASNVKDAQSNDETAGTPNEAAESSSF) is disordered. Positions 297 to 298 (FF) are COPII binding.

The protein belongs to the DUP/COS family. In terms of assembly, interacts with PRM8. Binds to COPII coated vesicles.

The protein localises to the cell membrane. In terms of biological role, may be involved in endoplasmic reticulum exit trafficking of proteins. The protein is Pheromone-regulated membrane protein 9 (PRM9) of Saccharomyces cerevisiae (strain ATCC 204508 / S288c) (Baker's yeast).